Consider the following 176-residue polypeptide: MITVEADISDLWPEQSNWEALAQTACQQAVSVSASDFLLAKDYETEISVCFSDNDTVHALNKTWRDKDRPTNVLSFPMMEAEELAEIKNRVGSECLLGDIILAFDVAKKEALEKGISLENHVTHLITHGTLHLLGYDHILDNEAEIMEDLERKALAQLDIPDPYSDHETGKEGLDG.

The Zn(2+) site is built by histidine 128, histidine 132, and histidine 138.

The protein belongs to the endoribonuclease YbeY family. Requires Zn(2+) as cofactor.

The protein localises to the cytoplasm. In terms of biological role, single strand-specific metallo-endoribonuclease involved in late-stage 70S ribosome quality control and in maturation of the 3' terminus of the 16S rRNA. The protein is Endoribonuclease YbeY of Zymomonas mobilis subsp. mobilis (strain ATCC 31821 / ZM4 / CP4).